The primary structure comprises 370 residues: Histidinol-phosphate aminotransferase 1 (370 aa).

At Lys222 the chain carries N6-(pyridoxal phosphate)lysine.

Belongs to the class-II pyridoxal-phosphate-dependent aminotransferase family. Histidinol-phosphate aminotransferase subfamily. In terms of assembly, homodimer. Requires pyridoxal 5'-phosphate as cofactor.

The enzyme catalyses L-histidinol phosphate + 2-oxoglutarate = 3-(imidazol-4-yl)-2-oxopropyl phosphate + L-glutamate. The protein operates within amino-acid biosynthesis; L-histidine biosynthesis; L-histidine from 5-phospho-alpha-D-ribose 1-diphosphate: step 7/9. This Bacillus cereus (strain ZK / E33L) protein is Histidinol-phosphate aminotransferase 1.